The sequence spans 170 residues: Glycine cleavage system H protein, mitochondrial (170 aa).

A mitochondrion-targeting transit peptide spans 1–45 (MSLRVVRSVRAVACSLRIALASCPPRPWAPSAAAVRSLRTGSALL). A Lipoyl-binding domain is found at 63–145 (IGTVGISNFA…YEDGWLIKMT (83 aa)). Lys104 is modified (N6-lipoyllysine).

Belongs to the GcvH family. As to quaternary structure, the glycine cleavage system is composed of four proteins: P (GLDC), T (GCST), L (DLD) and H (GCSH). Interacts with GLDC. The cofactor is (R)-lipoate.

It is found in the mitochondrion. The glycine cleavage system catalyzes the degradation of glycine. The H protein (GCSH) shuttles the methylamine group of glycine from the P protein (GLDC) to the T protein (GCST). Has a pivotal role in the lipoylation of enzymes involved in cellular energetics such as the mitochondrial dihydrolipoyllysine-residue acetyltransferase component of pyruvate dehydrogenase complex (DLAT), and the mitochondrial dihydrolipoyllysine-residue succinyltransferase component of 2-oxoglutarate dehydrogenase complex (DLST). This chain is Glycine cleavage system H protein, mitochondrial, found in Rattus norvegicus (Rat).